The sequence spans 215 residues: Protein C' (215 aa).

2 disordered regions span residues 12–34 (MPSFLKKILKLRGRRQEEESRSR) and 51–71 (SEGTEAGSTTPSTLPKDQALP). The involved in self-degradation and in host STAT1 degradation stretch occupies residues 15–22 (FLKKILKL). The span at 51-65 (SEGTEAGSTTPSTLP) shows a compositional bias: polar residues.

Belongs to the respirovirus protein C family. The different isoforms interact (via C-terminus) with unphosphorylated and phosphorylated human STAT1 (via N-terminus), favoring the formation of parallel STAT1 homodimers. The different isoforms do not interact with host STAT2. C protein interacts with L protein; this interaction has an inhibitory effect on viral transcription and replication. Post-translationally, Y1 and Y2 proteins are produced not only by alternative initiation, but also by proteolytic cleavage of C'. Only alternative initiation is detected in vitro, whereas in vivo cleavage seems to be predominant.

It is found in the host cytoplasm. The different products prevent the establishment of cellular antiviral state by blocking the interferon-alpha/beta (IFN-alpha/beta) and IFN-gamma signaling pathways. They inhibit IFN-alpha/beta induced tyrosine phosphorylation of STAT1 and STAT2. Blocking the IFN-alpha/beta pathway requires binding to STAT1 in the cytoplasm. They inhibit IFN-gamma induced serine phosphorylation of STAT1. Block the IFN-gamma pathway by binding to and stabilizing the parallel form of the STAT1 dimer, further inducing high-molecular-weight complex formation and inhibition of transcription by IFN-gamma. May also have a role in preventing the cell to enter apoptosis. Modulate regulation of viral transcription and replication. Overexpression inhibits the viral RNA polymerase. The absence of all C', C, Y1 and Y2 proteins leads to viral delayed growth. Plays an important role in virion particles release. Modulates virion shape. The chain is Protein C' (P/V/C) from Sendai virus (strain Harris) (SeV).